A 102-amino-acid chain; its full sequence is UPF0328 protein ECU10_1820 (102 aa).

It belongs to the UPF0328 family.

This chain is UPF0328 protein ECU10_1820, found in Encephalitozoon cuniculi (strain GB-M1) (Microsporidian parasite).